The primary structure comprises 484 residues: Nuclear rim protein 1 (484 aa).

Position 3 is a phosphoserine (Ser3). Helical transmembrane passes span 145-165 (FTIF…MFGY) and 252-272 (TAIV…AIVF). The interval 416 to 457 (SSNENLEKGGAYLPNQDQNRPSKSLSPLRKTPLSARQKRFEG) is disordered. Ser417 is modified (phosphoserine). Positions 430–440 (NQDQNRPSKSL) are enriched in polar residues. Ser474 bears the Phosphoserine mark.

It belongs to the NUR1 family. In terms of assembly, interacts with CSM1.

The protein resides in the nucleus membrane. In terms of biological role, member of a perinuclear network that controls recombination at multiple loci to maintain genome stability. Required for rDNA repeat stability. This Saccharomyces cerevisiae (strain ATCC 204508 / S288c) (Baker's yeast) protein is Nuclear rim protein 1 (NUR1).